The sequence spans 384 residues: Anhydro-N-acetylmuramic acid kinase (384 aa).

G9–D16 contributes to the ATP binding site.

Belongs to the anhydro-N-acetylmuramic acid kinase family.

It catalyses the reaction 1,6-anhydro-N-acetyl-beta-muramate + ATP + H2O = N-acetyl-D-muramate 6-phosphate + ADP + H(+). Its pathway is amino-sugar metabolism; 1,6-anhydro-N-acetylmuramate degradation. It participates in cell wall biogenesis; peptidoglycan recycling. Its function is as follows. Catalyzes the specific phosphorylation of 1,6-anhydro-N-acetylmuramic acid (anhMurNAc) with the simultaneous cleavage of the 1,6-anhydro ring, generating MurNAc-6-P. Is required for the utilization of anhMurNAc either imported from the medium or derived from its own cell wall murein, and thus plays a role in cell wall recycling. The chain is Anhydro-N-acetylmuramic acid kinase from Streptomyces avermitilis (strain ATCC 31267 / DSM 46492 / JCM 5070 / NBRC 14893 / NCIMB 12804 / NRRL 8165 / MA-4680).